The primary structure comprises 103 residues: Large ribosomal subunit protein uL24 (103 aa).

This sequence belongs to the universal ribosomal protein uL24 family. Part of the 50S ribosomal subunit.

Functionally, one of two assembly initiator proteins, it binds directly to the 5'-end of the 23S rRNA, where it nucleates assembly of the 50S subunit. In terms of biological role, one of the proteins that surrounds the polypeptide exit tunnel on the outside of the subunit. The sequence is that of Large ribosomal subunit protein uL24 from Actinobacillus pleuropneumoniae serotype 3 (strain JL03).